A 220-amino-acid polypeptide reads, in one-letter code: Fructose-6-phosphate aldolase (220 aa).

K85 serves as the catalytic Schiff-base intermediate with substrate.

The protein belongs to the transaldolase family. Type 3A subfamily. As to quaternary structure, homodecamer.

The protein localises to the cytoplasm. The enzyme catalyses beta-D-fructose 6-phosphate = dihydroxyacetone + D-glyceraldehyde 3-phosphate. Catalyzes the reversible formation of fructose 6-phosphate from dihydroxyacetone and D-glyceraldehyde 3-phosphate via an aldolization reaction. This chain is Fructose-6-phosphate aldolase, found in Salmonella heidelberg (strain SL476).